The primary structure comprises 199 residues: LIM domain-containing protein E (199 aa).

An LIM zinc-binding domain is found at 5–65; the sequence is VKCGACAKTA…PVHTPKVSAT (61 aa). The disordered stretch occupies residues 134–199; it reads YAVFGADGQP…EEEQQYEEEQ (66 aa). 2 stretches are compositionally biased toward low complexity: residues 146 to 155 and 163 to 174; these read EQQEQQQYTE and EEQQYQEEQQQY. Residues 175–199 show a composition bias toward acidic residues; sequence QEEEQQYQEEEQQYQEEEQQYEEEQ.

In terms of assembly, may interact with rac1A.

It localises to the cytoplasm. The protein localises to the cell cortex. Its subcellular location is the nucleus. The protein resides in the cell projection. It is found in the lamellipodium. It localises to the filopodium. The protein localises to the cytoskeleton. Functionally, associates with the actin cytoskeleton and may regulate actin polymerization in lamellipodia, through a rac1-dependent signaling pathway. May play a role in cell motility. Involved in cytokinesis by regulating the microtubule system and linking it to the cortical actin network. The protein is LIM domain-containing protein E (limE) of Dictyostelium discoideum (Social amoeba).